Reading from the N-terminus, the 166-residue chain is Regulatory protein RecX (166 aa).

The protein belongs to the RecX family.

It is found in the cytoplasm. Its function is as follows. Modulates RecA activity. The sequence is that of Regulatory protein RecX from Escherichia fergusonii (strain ATCC 35469 / DSM 13698 / CCUG 18766 / IAM 14443 / JCM 21226 / LMG 7866 / NBRC 102419 / NCTC 12128 / CDC 0568-73).